Reading from the N-terminus, the 167-residue chain is Biotin carboxyl carrier protein of acetyl-CoA carboxylase (167 aa).

A disordered region spans residues 53 to 91; that stretch reads SGFSQERPIPTDPKKDTIKETTTENSETSTTTSSGDFIS. The segment covering 64-74 has biased composition (basic and acidic residues); that stretch reads DPKKDTIKETT. Residues 75 to 86 are compositionally biased toward low complexity; sequence TENSETSTTTSS. Residues 87-163 form the Biotinyl-binding domain; that stretch reads GDFISSPLVG…QFGSKLFRIA (77 aa). N6-biotinyllysine is present on lysine 129.

As to quaternary structure, homodimer.

Its pathway is lipid metabolism; fatty acid biosynthesis. Functionally, this protein is a component of the acetyl coenzyme A carboxylase complex; first, biotin carboxylase catalyzes the carboxylation of the carrier protein and then the transcarboxylase transfers the carboxyl group to form malonyl-CoA. The sequence is that of Biotin carboxyl carrier protein of acetyl-CoA carboxylase (accB) from Chlamydia pneumoniae (Chlamydophila pneumoniae).